Reading from the N-terminus, the 1192-residue chain is DNA ligase 1 (1192 aa).

Disordered stretches follow at residues 29–257 (ELNK…KEKE) and 280–517 (EKEL…KSTQ). Residues 42–56 (EAVVKEKVEKKEKKE) show a composition bias toward basic and acidic residues. The span at 70-113 (EEEEEEQEEQDGEEEQEEEEEYQQQDEEIEEDINGEEEMELDEN) shows a compositional bias: acidic residues. Positions 141–155 (KTIENKETKKPEKQS) are enriched in basic and acidic residues. Acidic residues predominate over residues 172–198 (DDEEDEEDENKTDDNDLDDMLDDDSDN). Basic and acidic residues-rich tracts occupy residues 199–257 (EKDS…KEKE) and 280–368 (EKEL…RANA). 2 stretches are compositionally biased toward low complexity: residues 371-382 (KSSVPTSTSKNS) and 410-434 (STTT…ISSP). Over residues 435–467 (SKKEEKEVITSKKQVEATKVEVKKEKEKEKEKE) the composition is skewed to basic and acidic residues. A compositionally biased stretch (acidic residues) spans 468-511 (KEDDEEEEEEEEDDDEKLEDIDEEEYEEEEEEDEEGISENEEEE). The interval 724 to 733 (KLRIGLAERS) is interaction with target DNA. Residue Glu-842 participates in ATP binding. Residue Lys-844 is the N6-AMP-lysine intermediate of the active site. ATP is bound by residues Arg-849 and Arg-865. Glu-897 contacts Mg(2+). Residues 918 to 920 (ARK) form an interaction with target DNA region. Glu-996 serves as a coordination point for Mg(2+). Lys-1001, Arg-1014, and Lys-1020 together coordinate ATP. A disordered region spans residues 1157-1192 (DKSPEDATSSDQVVDMYQNQKINSQSSKINEKDEDY). Residues 1162–1184 (DATSSDQVVDMYQNQKINSQSSK) are compositionally biased toward polar residues.

Belongs to the ATP-dependent DNA ligase family. The cofactor is Mg(2+).

The protein resides in the nucleus. The enzyme catalyses ATP + (deoxyribonucleotide)n-3'-hydroxyl + 5'-phospho-(deoxyribonucleotide)m = (deoxyribonucleotide)n+m + AMP + diphosphate.. In terms of biological role, DNA ligase that seals nicks in double-stranded DNA during DNA replication, DNA recombination and DNA repair. This chain is DNA ligase 1 (lig1), found in Dictyostelium discoideum (Social amoeba).